The following is a 131-amino-acid chain: Arsenate reductase 2 (131 aa).

Catalysis depends on nucleophile residues Cys10, Cys82, and Cys89. 2 disulfides stabilise this stretch: Cys10/Cys82 and Cys82/Cys89.

The protein belongs to the low molecular weight phosphotyrosine protein phosphatase family. Thioredoxin-coupled ArsC subfamily.

The protein resides in the cytoplasm. It catalyses the reaction arsenate + [thioredoxin]-dithiol + H(+) = arsenite + [thioredoxin]-disulfide + H2O. Its function is as follows. Catalyzes the reduction of arsenate [As(V)] to arsenite [As(III)]. This Staphylococcus epidermidis (strain ATCC 35984 / DSM 28319 / BCRC 17069 / CCUG 31568 / BM 3577 / RP62A) protein is Arsenate reductase 2.